Reading from the N-terminus, the 257-residue chain is UPF0246 protein Sputcn32_1053 (257 aa).

Belongs to the UPF0246 family.

The sequence is that of UPF0246 protein Sputcn32_1053 from Shewanella putrefaciens (strain CN-32 / ATCC BAA-453).